The primary structure comprises 98 residues: uncharacterized protein (98 aa).

It is found in the cytoplasm. This is an uncharacterized protein from Saccharomyces cerevisiae (strain ATCC 204508 / S288c) (Baker's yeast).